A 401-amino-acid polypeptide reads, in one-letter code: Acetate kinase (401 aa).

Asn-7 serves as a coordination point for Mg(2+). Residue Lys-14 participates in ATP binding. Arg-91 contributes to the substrate binding site. The active-site Proton donor/acceptor is the Asp-148. ATP is bound by residues 208 to 212 (HLGNG), 283 to 285 (DFR), and 331 to 335 (GVGEN). Glu-384 contacts Mg(2+).

Belongs to the acetokinase family. As to quaternary structure, homodimer. Requires Mg(2+) as cofactor. The cofactor is Mn(2+).

It localises to the cytoplasm. The catalysed reaction is acetate + ATP = acetyl phosphate + ADP. Its pathway is metabolic intermediate biosynthesis; acetyl-CoA biosynthesis; acetyl-CoA from acetate: step 1/2. In terms of biological role, catalyzes the formation of acetyl phosphate from acetate and ATP. Can also catalyze the reverse reaction. The sequence is that of Acetate kinase from Helicobacter hepaticus (strain ATCC 51449 / 3B1).